Reading from the N-terminus, the 126-residue chain is Large ribosomal subunit protein bL20 (126 aa).

The segment covering 1-15 (MARVKRAVNAQKKRR) has biased composition (basic residues). A disordered region spans residues 1 to 20 (MARVKRAVNAQKKRRTTLER).

Belongs to the bacterial ribosomal protein bL20 family.

Its function is as follows. Binds directly to 23S ribosomal RNA and is necessary for the in vitro assembly process of the 50S ribosomal subunit. It is not involved in the protein synthesizing functions of that subunit. The sequence is that of Large ribosomal subunit protein bL20 from Beutenbergia cavernae (strain ATCC BAA-8 / DSM 12333 / CCUG 43141 / JCM 11478 / NBRC 16432 / NCIMB 13614 / HKI 0122).